The sequence spans 964 residues: Collagen alpha-1(I) chain (964 aa).

The disordered stretch occupies residues 1–964 (GGISVPGPMG…PGPPGPPGPP (964 aa)). 4-hydroxyproline is present on residues proline 18, proline 21, proline 24, proline 33, proline 36, proline 39, proline 53, proline 68, proline 74, proline 83, and proline 89. Positions 56-70 (NGDDGEAGKPGRPGE) are enriched in basic and acidic residues. Position 92 is a 5-hydroxylysine; alternate (lysine 92). A glycan (O-linked (Gal...) hydroxylysine; alternate) is linked at lysine 92. Phosphoserine is present on serine 98. 2 stretches are compositionally biased toward low complexity: residues 106–117 (DAGPAGPKQMGP) and 126–144 (PGAS…TGAA). 4-hydroxyproline occurs at positions 126, 147, 156, 159, 186, 189, 201, 207, 216, 222, 225, and 240. Pro residues predominate over residues 146-158 (PPGPTGPAGPPGF). The span at 192–231 (AGAAGPAGNPGADGQPGAKGANGAPGIAGAPGFPGARGPS) shows a compositional bias: low complexity. Lysine 243 is subject to 5-hydroxylysine. Residues proline 249, proline 252, proline 260, proline 269, proline 284, proline 290, proline 299, and proline 305 each carry the 4-hydroxyproline modification. Residues 294 to 303 (GERGGPGSRG) show a composition bias toward gly residues. Lysine 314 is modified (5-hydroxylysine). 4-hydroxyproline occurs at positions 323, 332, 338, 344, 353, 356, 365, 374, 379, 391, 400, 409, 412, 430, 447, 453, 459, 465, 471, 477, 489, 498, 510, and 519. Over residues 347–373 (KGLTGSPGSPGPDGKTGPPGPAGQDGR) the composition is skewed to low complexity. Positions 381-400 (ARGQAGVMGFPGPKGAAGEP) are enriched in low complexity. Positions 459–468 (PGEAGKPGEQ) are enriched in low complexity. Lysine 531 is subject to 5-hydroxylysine. 4-hydroxyproline occurs at positions 537, 552, and 558. Low complexity predominate over residues 564-578 (SGPSGPAGPTGARGA). Serine 567 carries the phosphoserine modification. 8 positions are modified to 4-hydroxyproline: proline 579, proline 585, proline 588, proline 597, proline 603, proline 621, proline 630, and proline 639. The segment covering 591-618 (AGFAGPPGADGQPGAKGEPGDAGAKGDA) has biased composition (low complexity). Pro residues predominate over residues 620–632 (PPGPAGPTGPPGP). A 5-hydroxylysine modification is found at lysine 642. Positions 647–663 (SAGPPGATGFPGAAGRV) are enriched in low complexity. Proline 651 and proline 657 each carry 4-hydroxyproline. A 3-hydroxyproline modification is found at proline 665. 15 positions are modified to 4-hydroxyproline: proline 666, proline 675, proline 678, proline 704, proline 712, proline 721, proline 739, proline 748, proline 751, proline 757, proline 772, proline 778, proline 784, proline 792, and proline 798. A compositionally biased stretch (low complexity) spans 709–721 (KGSPGADGPAGAP). Residues 771 to 781 (PPGPMGPPGLA) are compositionally biased toward pro residues. At lysine 807 the chain carries 5-hydroxylysine. The segment covering 815–830 (PGPPGAPGAPGAPGPV) has biased composition (pro residues). 3 positions are modified to 4-hydroxyproline: proline 818, proline 821, and proline 824. Over residues 850–864 (AGPAGARGPAGPQGP) the composition is skewed to low complexity. Over residues 865-879 (RGDKGETGEQGDRGI) the composition is skewed to basic and acidic residues. A 5-hydroxylysine modification is found at lysine 868. Lysine 880 carries the post-translational modification 5-hydroxylysine; alternate. Lysine 880 is a glycosylation site (O-linked (Gal...) hydroxylysine; alternate). 4 positions are modified to 4-hydroxyproline: proline 895, proline 898, proline 916, and proline 931. Residues 898-931 (PGEQGPSGASGPAGPRGPPGSAGSPGKDGLNGLP) are compositionally biased toward low complexity. Position 936 is a 3-hydroxyproline (proline 936). The residue at position 937 (proline 937) is a 4-hydroxyproline. Residues 949-964 (VGPPGPPGPPGPPGPP) show a composition bias toward pro residues. Proline 951 is modified (3-hydroxyproline). The residue at position 952 (proline 952) is a 4-hydroxyproline. At proline 954 the chain carries 3-hydroxyproline. Proline 955 is modified (4-hydroxyproline). Proline 957 carries the 3-hydroxyproline modification. Proline 958, proline 961, and proline 964 each carry 4-hydroxyproline.

The protein belongs to the fibrillar collagen family. As to quaternary structure, trimers of one alpha 2(I) and two alpha 1(I) chains. Contains mostly 4-hydroxyproline. Proline residues at the third position of the tripeptide repeating unit (G-X-Y) are hydroxylated in some or all of the chains. In terms of processing, contains 3-hydroxyproline at a few sites. This modification occurs on the first proline residue in the sequence motif Gly-Pro-Hyp, where Hyp is 4-hydroxyproline. Post-translationally, lysine residues at the third position of the tripeptide repeating unit (G-X-Y) are 5-hydroxylated in some or all of the chains. O-glycosylated on hydroxylated lysine residues. The O-linked glycan consists of a Glc-Gal disaccharide. In terms of tissue distribution, expressed in bones.

It is found in the secreted. The protein resides in the extracellular space. It localises to the extracellular matrix. Type I collagen is a member of group I collagen (fibrillar forming collagen). In Parocnus serus (Greater Haitian ground sloth), this protein is Collagen alpha-1(I) chain.